Here is a 601-residue protein sequence, read N- to C-terminus: Sulfite reductase [NADPH] flavoprotein alpha-component (601 aa).

The Flavodoxin-like domain maps to 64–202 (ITLISASQTG…AAAEWRARIV (139 aa)). FMN-binding positions include 70–75 (SQTGNA), 117–120 (STQG), and 153–162 (LGDTSYEFFC). An FAD-binding FR-type domain is found at 236 to 450 (EEPLVASLSV…IEHNDNFRLP (215 aa)). Residues T324, A358, 388-391 (RLYS), 406-408 (TVG), and 421-424 (GGAS) contribute to the FAD site. NADP(+) is bound by residues 521–522 (SR), 527–531 (KIYVQ), and D563. Y601 serves as a coordination point for FAD.

It belongs to the NADPH-dependent sulphite reductase flavoprotein subunit CysJ family. The protein in the N-terminal section; belongs to the flavodoxin family. This sequence in the C-terminal section; belongs to the flavoprotein pyridine nucleotide cytochrome reductase family. As to quaternary structure, alpha(8)-beta(8). The alpha component is a flavoprotein, the beta component is a hemoprotein. The cofactor is FAD. It depends on FMN as a cofactor.

The catalysed reaction is hydrogen sulfide + 3 NADP(+) + 3 H2O = sulfite + 3 NADPH + 4 H(+). The protein operates within sulfur metabolism; hydrogen sulfide biosynthesis; hydrogen sulfide from sulfite (NADPH route): step 1/1. Component of the sulfite reductase complex that catalyzes the 6-electron reduction of sulfite to sulfide. This is one of several activities required for the biosynthesis of L-cysteine from sulfate. The flavoprotein component catalyzes the electron flow from NADPH -&gt; FAD -&gt; FMN to the hemoprotein component. The sequence is that of Sulfite reductase [NADPH] flavoprotein alpha-component from Enterobacter sp. (strain 638).